Reading from the N-terminus, the 487-residue chain is NADH-quinone oxidoreductase subunit N (487 aa).

Helical transmembrane passes span 18 to 38 (LVPE…DLFV), 44 to 64 (VWTH…LATG), 84 to 104 (VMKT…WTYL), 116 to 136 (VLVL…SLLM), 169 to 189 (FVLG…VYGA), 211 to 231 (LLTG…AAPF), 242 to 262 (APAP…FGMA), 277 to 297 (WHLL…LMAI), 305 to 325 (MLAY…AGGG), 333 to 353 (MFYA…IIAL), 377 to 397 (AGLV…LGFW), 410 to 430 (DMLW…YYYL), and 457 to 477 (VLGV…PIMV).

This sequence belongs to the complex I subunit 2 family. As to quaternary structure, NDH-1 is composed of 14 different subunits. Subunits NuoA, H, J, K, L, M, N constitute the membrane sector of the complex.

It localises to the cell inner membrane. The enzyme catalyses a quinone + NADH + 5 H(+)(in) = a quinol + NAD(+) + 4 H(+)(out). In terms of biological role, NDH-1 shuttles electrons from NADH, via FMN and iron-sulfur (Fe-S) centers, to quinones in the respiratory chain. The immediate electron acceptor for the enzyme in this species is believed to be ubiquinone. Couples the redox reaction to proton translocation (for every two electrons transferred, four hydrogen ions are translocated across the cytoplasmic membrane), and thus conserves the redox energy in a proton gradient. This Xanthomonas euvesicatoria pv. vesicatoria (strain 85-10) (Xanthomonas campestris pv. vesicatoria) protein is NADH-quinone oxidoreductase subunit N.